We begin with the raw amino-acid sequence, 186 residues long: NADH dehydrogenase [ubiquinone] 1 beta subcomplex subunit 8, mitochondrial (186 aa).

The transit peptide at 1–28 (MAVARAGVLGVQWLQRASRNVMPLGART) directs the protein to the mitochondrion. The helical transmembrane segment at 133-153 (LFGFLAFMIFMCWVGDVYPVY) threads the bilayer.

It belongs to the complex I NDUFB8 subunit family. In terms of assembly, complex I is composed of 45 different subunits.

The protein localises to the mitochondrion inner membrane. Accessory subunit of the mitochondrial membrane respiratory chain NADH dehydrogenase (Complex I), that is believed not to be involved in catalysis. Complex I functions in the transfer of electrons from NADH to the respiratory chain. The immediate electron acceptor for the enzyme is believed to be ubiquinone. This is NADH dehydrogenase [ubiquinone] 1 beta subcomplex subunit 8, mitochondrial (NDUFB8) from Homo sapiens (Human).